Here is a 64-residue protein sequence, read N- to C-terminus: Large ribosomal subunit protein bL35 (64 aa).

It belongs to the bacterial ribosomal protein bL35 family.

This chain is Large ribosomal subunit protein bL35, found in Pseudomonas savastanoi pv. phaseolicola (strain 1448A / Race 6) (Pseudomonas syringae pv. phaseolicola (strain 1448A / Race 6)).